A 101-amino-acid chain; its full sequence is Small ribosomal subunit protein uS14 (101 aa).

The segment at 1–20 (MAKTSQVNRNKRREKMAARD) is disordered.

Belongs to the universal ribosomal protein uS14 family. As to quaternary structure, part of the 30S ribosomal subunit. Contacts proteins S3 and S10.

Binds 16S rRNA, required for the assembly of 30S particles and may also be responsible for determining the conformation of the 16S rRNA at the A site. The polypeptide is Small ribosomal subunit protein uS14 (Acidiphilium cryptum (strain JF-5)).